We begin with the raw amino-acid sequence, 421 residues long: uncharacterized protein (421 aa).

It belongs to the glycosyltransferase 28 family.

This is an uncharacterized protein from Mycobacterium leprae (strain TN).